The primary structure comprises 674 residues: MDHLLQKTQIQNQTEQVMNITNPNSIYIKGRLYFKGYKKIELHCFVDTGASLCIASKFVIPEEHWINAERPIMVKIADGSSITINKVCRDIDLIIAGEIFHIPTVYQQESGIDFIIGNNFCQLYEPFIQFTDRVIFTKDRTYPVHIAKLTRAVRVGTEGFLESMKKRSKTQQPEPVNISTNKIAILSEGRRLSEEKLFITQQRMQKIEELLEKVCSENPLDPNKTKQWMKASIKLSDPSKAIKVKPMKYSPMDREEFDKQIKELLDLKVIKPSKSPHMAPAFLVNNEAEKRRGKKRMVVNYKAMNKATVGDAYNPPNKDELLTLIRGKKIFSSFDCKSGFWQVLLDQESRPLTAFTCPQGHYEWNVVPFGLKQAPSIFQRHMDEAFRVFRKFCCVYVDDILVFSNNEEDHLLHVAMILQKCNQHGIILSKKKAQLFKKKINFLGLEIDEGTHKPQGHILEHINKFPDTLEDKKQLQRFLGILTYASDYIPKLAQIRKPLQAKLKENVPWKWTKEDTLYMQKVKKNLQGFPPLHHPLPEEKLIIETDASDDYWGGMLKAIKINEGTNTELICRYASGSFKAAEKNYHSNDKETLAVINTIKKFSIYLTPVHFLIRTDNTHFKSFVNLNYKGDSKLGRNIRWQAWLSHYSFDVEHIKGTDNHFADFLSREFNRVNS.

The segment at 40-130 (IELHCFVDTG…CQLYEPFIQF (91 aa)) is protease. The active site involves D47. One can recognise a Reverse transcriptase domain in the interval 267–447 (LKVIKPSKSP…KKINFLGLEI (181 aa)).

Belongs to the caulimoviridae enzymatic polyprotein family.

The enzyme catalyses DNA(n) + a 2'-deoxyribonucleoside 5'-triphosphate = DNA(n+1) + diphosphate. Encodes for at least two polypeptides: protease (PR) and reverse transcriptase (RT). The protease processes the polyprotein in cis. Reverse transcriptase is multifunctional enzyme that converts the viral RNA genome into dsDNA in viral cytoplasmic capsids. This enzyme displays a DNA polymerase activity that can copy either DNA or RNA templates, and a ribonuclease H (RNase H) activity that cleaves the RNA strand of RNA-DNA heteroduplexes in a partially processive 3'- to 5'-endonucleasic mode. Neo-synthesized pregenomic RNA (pgRNA) are encapsidated, and reverse-transcribed inside the nucleocapsid. Partial (+)DNA is synthesized from the (-)DNA template and generates the relaxed circular DNA (RC-DNA) genome. After budding and infection, the RC-DNA migrates in the nucleus, and is converted into a plasmid-like covalently closed circular DNA (cccDNA). The polypeptide is Enzymatic polyprotein (Arabidopsis thaliana (Mouse-ear cress)).